Reading from the N-terminus, the 523-residue chain is Probable lipid II flippase MurJ (523 aa).

12 consecutive transmembrane segments (helical) span residues 98 to 118 (AFYS…IVYV), 146 to 166 (IMFG…ILNA), 170 to 190 (FGLP…FTFM), 201 to 221 (GLAW…AVAL), 246 to 266 (MLPG…NLYF), 284 to 304 (LLEL…LPTL), 328 to 348 (LFLA…IIEV), 360 to 380 (VQMT…VSCS), 395 to 415 (VPMV…PVLM), 422 to 442 (GLMI…MGLL), 461 to 481 (FVLA…LMAQ), and 489 to 509 (LALF…AYVL).

It belongs to the MurJ/MviN family.

It is found in the cell inner membrane. It participates in cell wall biogenesis; peptidoglycan biosynthesis. Involved in peptidoglycan biosynthesis. Transports lipid-linked peptidoglycan precursors from the inner to the outer leaflet of the cytoplasmic membrane. The protein is Probable lipid II flippase MurJ of Bdellovibrio bacteriovorus (strain ATCC 15356 / DSM 50701 / NCIMB 9529 / HD100).